The chain runs to 471 residues: Mannose-1-phosphate guanylyltransferase (471 aa).

It belongs to the mannose-6-phosphate isomerase type 2 family.

The enzyme catalyses alpha-D-mannose 1-phosphate + GTP + H(+) = GDP-alpha-D-mannose + diphosphate. It participates in nucleotide-sugar biosynthesis; GDP-alpha-D-mannose biosynthesis; GDP-alpha-D-mannose from alpha-D-mannose 1-phosphate (GTP route): step 1/1. Involved in GDP-mannose biosynthesis which serves as the activated sugar nucleotide precursor for mannose residues in cell surface polysaccharides. This enzyme participates in synthesis of the LPS O antigen. This chain is Mannose-1-phosphate guanylyltransferase (manC), found in Salmonella montevideo.